Reading from the N-terminus, the 163-residue chain is 2-C-methyl-D-erythritol 2,4-cyclodiphosphate synthase (163 aa).

A divalent metal cation-binding residues include D12 and H14. Residues 12-14 (DVH) and 38-39 (HS) contribute to the 4-CDP-2-C-methyl-D-erythritol 2-phosphate site. H46 is a binding site for a divalent metal cation. 4-CDP-2-C-methyl-D-erythritol 2-phosphate contacts are provided by residues 60–62 (DIG), 65–69 (FPDTD), 136–139 (TTTE), F143, and R146.

This sequence belongs to the IspF family. In terms of assembly, homotrimer. Requires a divalent metal cation as cofactor.

It catalyses the reaction 4-CDP-2-C-methyl-D-erythritol 2-phosphate = 2-C-methyl-D-erythritol 2,4-cyclic diphosphate + CMP. The protein operates within isoprenoid biosynthesis; isopentenyl diphosphate biosynthesis via DXP pathway; isopentenyl diphosphate from 1-deoxy-D-xylulose 5-phosphate: step 4/6. Involved in the biosynthesis of isopentenyl diphosphate (IPP) and dimethylallyl diphosphate (DMAPP), two major building blocks of isoprenoid compounds. Catalyzes the conversion of 4-diphosphocytidyl-2-C-methyl-D-erythritol 2-phosphate (CDP-ME2P) to 2-C-methyl-D-erythritol 2,4-cyclodiphosphate (ME-CPP) with a corresponding release of cytidine 5-monophosphate (CMP). This is 2-C-methyl-D-erythritol 2,4-cyclodiphosphate synthase from Acinetobacter baylyi (strain ATCC 33305 / BD413 / ADP1).